Consider the following 333-residue polypeptide: Adenosine deaminase (333 aa).

Residues histidine 12 and histidine 14 each coordinate Zn(2+). Residues histidine 14, aspartate 16, and glycine 170 each coordinate substrate. Histidine 197 lines the Zn(2+) pocket. Catalysis depends on glutamate 200, which acts as the Proton donor. A Zn(2+)-binding site is contributed by aspartate 278. Aspartate 279 is a substrate binding site.

This sequence belongs to the metallo-dependent hydrolases superfamily. Adenosine and AMP deaminases family. Adenosine deaminase subfamily. Zn(2+) serves as cofactor.

It carries out the reaction adenosine + H2O + H(+) = inosine + NH4(+). It catalyses the reaction 2'-deoxyadenosine + H2O + H(+) = 2'-deoxyinosine + NH4(+). In terms of biological role, catalyzes the hydrolytic deamination of adenosine and 2-deoxyadenosine. The protein is Adenosine deaminase of Salmonella schwarzengrund (strain CVM19633).